Here is a 559-residue protein sequence, read N- to C-terminus: Regulatory protein PHO2 (559 aa).

Disordered stretches follow at residues 16 to 88 (ATDL…KGEA), 132 to 158 (LRKKQHGSNKDTIPSSQSRDIANDYDR), 293 to 333 (INSN…AKDN), and 534 to 559 (PTDSELPNTPDFLKNTNELTDEHRWI). Low complexity-rich tracts occupy residues 24-52 (HDQQQQQQQQHDQQHNQQQQPQPQPIQTQ) and 63-74 (NDMSASSNASDS). Positions 77 to 136 (QRPKRTRAKGEALDVLKRKFEINPTPSLVERKKISDLIGMPEKNVRIWFQNRRAKLRKKQ) form a DNA-binding region, homeobox. Polar residues predominate over residues 141-151 (KDTIPSSQSRD). Low complexity predominate over residues 293–307 (INSNNTSDKNNSNTN). Positions 308–323 (NDDDNDDNSNEDNDNS) are enriched in acidic residues. The span at 324-333 (SEDKRNAKDN) shows a compositional bias: basic and acidic residues. A Phosphothreonine modification is found at Thr542.

It is found in the nucleus. Functionally, regulator in phosphate metabolism and acts as a derepressor of another central regulator PHO5. Binds to the upstream activator sequence (UAS) of PHO5. It also binds to the TRP4, HIS4, and CYC1 promoters. This is Regulatory protein PHO2 (PHO2) from Saccharomyces cerevisiae (strain ATCC 204508 / S288c) (Baker's yeast).